The primary structure comprises 75 residues: U6-lycotoxin-Ls1d (75 aa).

Positions 1–21 are cleaved as a signal peptide; that stretch reads MKLLLFTALVLVVISLIEVEA. A propeptide spanning residues 22–25 is cleaved from the precursor; the sequence is ENER.

Belongs to the neurotoxin 19 (CSTX) family. 06 (U6-Lctx) subfamily. Post-translationally, contains 4 disulfide bonds. As to expression, expressed by the venom gland.

The protein localises to the secreted. The polypeptide is U6-lycotoxin-Ls1d (Lycosa singoriensis (Wolf spider)).